Consider the following 207-residue polypeptide: Calcipressin-like protein (207 aa).

The interval 176–181 is required for tax-6 interaction; the sequence is PAIIVH.

It belongs to the RCAN family. As to quaternary structure, interacts with tax-6 (via catalytic domain); the interaction is calcium-dependent. In terms of tissue distribution, expressed in lateral hypodermal cells, marginal cells of the pharynx, vulva epithelial cells, ventral and dorsal nerve cords and commissures and various neurons in the anterior and posterior regions. Expressed in male tail structures including the diagonal muscles, sensory rays and spicules. Expressed in PHC neurons and most tail neurons and support cells of the phasmid neurons. Also expressed in pharyngeal muscle, head neurons, excretory canal cells and hypodermal seam cells.

Functionally, inhibits tax-6/calcineurin A phosphatase activity and thereby negatively regulates calcineurin-mediated functions. Plays a role in modulating temperature-dependent calcium responses in AFD neurons and in addition, also negatively regulates thermotaxis in a tax-6-dependent manner in AFD neurons. In response to changes in intracellular calcium levels may also regulate nuclear translocation of transcriptional regulators such as crtc-1. May play a role in regulating body size. Plays a role in male tail tip morphogenesis. The chain is Calcipressin-like protein from Caenorhabditis elegans.